The sequence spans 205 residues: Small ribosomal subunit protein uS3c (205 aa).

Positions 37 to 106 (IRQLLRDYVL…TWRISLVEVS (70 aa)) constitute a KH type-2 domain.

Belongs to the universal ribosomal protein uS3 family. In terms of assembly, part of the 30S ribosomal subunit.

It localises to the plastid. The protein resides in the chloroplast. In Cyanidioschyzon merolae (strain NIES-3377 / 10D) (Unicellular red alga), this protein is Small ribosomal subunit protein uS3c (rps3).